The following is a 291-amino-acid chain: Elongation factor Ts, mitochondrial (291 aa).

This sequence belongs to the EF-Ts family.

It localises to the mitochondrion. Associates with the EF-Tu.GDP complex and induces the exchange of GDP to GTP. It remains bound to the aminoacyl-tRNA.EF-Tu.GTP complex up to the GTP hydrolysis stage on the ribosome. The polypeptide is Elongation factor Ts, mitochondrial (Nematostella vectensis (Starlet sea anemone)).